The primary structure comprises 344 residues: Uroporphyrinogen decarboxylase (344 aa).

Residues 27–31 (RQAGR), F46, D77, Y153, T208, and H324 contribute to the substrate site.

This sequence belongs to the uroporphyrinogen decarboxylase family. As to quaternary structure, homodimer.

It localises to the cytoplasm. It carries out the reaction uroporphyrinogen III + 4 H(+) = coproporphyrinogen III + 4 CO2. It participates in porphyrin-containing compound metabolism; protoporphyrin-IX biosynthesis; coproporphyrinogen-III from 5-aminolevulinate: step 4/4. Functionally, catalyzes the decarboxylation of four acetate groups of uroporphyrinogen-III to yield coproporphyrinogen-III. The protein is Uroporphyrinogen decarboxylase of Bradyrhizobium diazoefficiens (strain JCM 10833 / BCRC 13528 / IAM 13628 / NBRC 14792 / USDA 110).